Consider the following 107-residue polypeptide: ATP-dependent Clp protease adapter protein ClpS (107 aa).

Belongs to the ClpS family. As to quaternary structure, binds to the N-terminal domain of the chaperone ClpA.

Its function is as follows. Involved in the modulation of the specificity of the ClpAP-mediated ATP-dependent protein degradation. This is ATP-dependent Clp protease adapter protein ClpS from Acinetobacter baylyi (strain ATCC 33305 / BD413 / ADP1).